The sequence spans 345 residues: Dihydroorotase (345 aa).

2 residues coordinate Zn(2+): H13 and H15. Substrate is bound by residues 15–17 (HFR) and N41. The Zn(2+) site is built by K98, H135, and H173. K98 is subject to N6-carboxylysine. A substrate-binding site is contributed by H135. L218 contacts substrate. D246 serves as a coordination point for Zn(2+). Residue D246 is part of the active site. Residues H250 and A262 each contribute to the substrate site.

Belongs to the metallo-dependent hydrolases superfamily. DHOase family. Class II DHOase subfamily. As to quaternary structure, homodimer. It depends on Zn(2+) as a cofactor.

The enzyme catalyses (S)-dihydroorotate + H2O = N-carbamoyl-L-aspartate + H(+). Its pathway is pyrimidine metabolism; UMP biosynthesis via de novo pathway; (S)-dihydroorotate from bicarbonate: step 3/3. Functionally, catalyzes the reversible cyclization of carbamoyl aspartate to dihydroorotate. The sequence is that of Dihydroorotase from Shewanella piezotolerans (strain WP3 / JCM 13877).